The chain runs to 251 residues: tRNA pseudouridine synthase A (251 aa).

D53 functions as the Nucleophile in the catalytic mechanism. Y110 is a substrate binding site.

Belongs to the tRNA pseudouridine synthase TruA family. As to quaternary structure, homodimer.

It carries out the reaction uridine(38/39/40) in tRNA = pseudouridine(38/39/40) in tRNA. Formation of pseudouridine at positions 38, 39 and 40 in the anticodon stem and loop of transfer RNAs. This is tRNA pseudouridine synthase A from Mesoplasma florum (strain ATCC 33453 / NBRC 100688 / NCTC 11704 / L1) (Acholeplasma florum).